We begin with the raw amino-acid sequence, 604 residues long: MKAQEDPGSSKQHECPDSAGTSTRDQQAPLPAEPKFDMLYKIEDVPPWYLCILLGFQHYLTCFSGTIAVPFLLAEALCVGRDQHMISQLIGTIFTCVGITTLIQTTVGIRLPLFQASAFAFLVPAKAILALERWKCPPEEEIYGNWSMPLNTSHIWHPRIREVQGAIMVSSVVEVVIGLLGLPGALLSYIGPLTVTPTVSLIGLSVFQAAGDRAGSHWGISACSILLIVLFSQYLRNLTFLLPVYRWGKGLTLFRIQIFKMFPIVLAIMTVWLLCYVLTLTDVLPADPTVYGFQARTDARGDIMAISPWIRIPYPCQWGLPTVTVAAVLGMFSATLAGIIESIGDYYACARLAGAPPPPVHAINRGIFTEGVCCIIAGLLGTGNGSTSSSPNIGVLGITKVGSRRVVQYGAGIMLILGAIGKFTALFASLPDPILGGMFCTLFGMITAVGLSNLQFVDMNSSRNLFVLGFSMFFGLTLPNYLDSNPGAINTGVPEVDQILTVLLTTEMFVGGCLAFILDNTVPGSPEERGLIQWKAGAHANSETLASLKSYDFPFGMGMVKRTTFFRYIPICPVFRGFSKTENQPAVLEDAPDNTETGSVCTKV.

A disordered region spans residues 1–29 (MKAQEDPGSSKQHECPDSAGTSTRDQQAP). Topologically, residues 1 to 59 (MKAQEDPGSSKQHECPDSAGTSTRDQQAPLPAEPKFDMLYKIEDVPPWYLCILLGFQHY) are cytoplasmic. The helical transmembrane segment at 60 to 80 (LTCFSGTIAVPFLLAEALCVG) threads the bilayer. Topologically, residues 81 to 88 (RDQHMISQ) are extracellular. A helical transmembrane segment spans residues 89-109 (LIGTIFTCVGITTLIQTTVGI). Residue arginine 110 is a topological domain, cytoplasmic. A helical transmembrane segment spans residues 111–131 (LPLFQASAFAFLVPAKAILAL). Topologically, residues 132–166 (ERWKCPPEEEIYGNWSMPLNTSHIWHPRIREVQGA) are extracellular. Asparagine 145 and asparagine 151 each carry an N-linked (GlcNAc...) asparagine glycan. The chain crosses the membrane as a helical span at residues 167–187 (IMVSSVVEVVIGLLGLPGALL). Residues 188–214 (SYIGPLTVTPTVSLIGLSVFQAAGDRA) lie on the Cytoplasmic side of the membrane. Residues 215–232 (GSHWGISACSILLIVLFS) traverse the membrane as a helical segment. At 233 to 236 (QYLR) the chain is on the extracellular side. The helical intramembrane region spans 237–250 (NLTFLLPVYRWGKG). The Extracellular portion of the chain corresponds to 251–257 (LTLFRIQ). Residues 258 to 278 (IFKMFPIVLAIMTVWLLCYVL) form a helical membrane-spanning segment. The Cytoplasmic segment spans residues 279–319 (TLTDVLPADPTVYGFQARTDARGDIMAISPWIRIPYPCQWG). A helical membrane pass occupies residues 320 to 340 (LPTVTVAAVLGMFSATLAGII). At 341-365 (ESIGDYYACARLAGAPPPPVHAINR) the chain is on the extracellular side. Residues 366–386 (GIFTEGVCCIIAGLLGTGNGS) form a helical membrane-spanning segment. The Cytoplasmic portion of the chain corresponds to 387–409 (TSSSPNIGVLGITKVGSRRVVQY). A helical transmembrane segment spans residues 410 to 430 (GAGIMLILGAIGKFTALFASL). The Extracellular segment spans residues 431–433 (PDP). The helical transmembrane segment at 434–454 (ILGGMFCTLFGMITAVGLSNL) threads the bilayer. Residues 455–464 (QFVDMNSSRN) lie on the Cytoplasmic side of the membrane. The helical transmembrane segment at 465–485 (LFVLGFSMFFGLTLPNYLDSN) threads the bilayer. Residues 486-497 (PGAINTGVPEVD) are Extracellular-facing. Residues 498–518 (QILTVLLTTEMFVGGCLAFIL) traverse the membrane as a helical segment. The Cytoplasmic portion of the chain corresponds to 519 to 604 (DNTVPGSPEE…TETGSVCTKV (86 aa)). A Phosphothreonine modification is found at threonine 597. Serine 599 is modified (phosphoserine). Threonine 602 is modified (phosphothreonine).

It belongs to the nucleobase:cation symporter-2 (NCS2) (TC 2.A.40) family. Post-translationally, phosphorylated. In terms of tissue distribution, highly expressed in the straight segment of proximal tubules in the kidney, in intestine and liver. Detected in epithelial cells of the bronchiole and epididymis.

The protein resides in the cell membrane. It carries out the reaction L-ascorbate(out) + 2 Na(+)(out) = L-ascorbate(in) + 2 Na(+)(in). It catalyses the reaction urate(out) + 2 Na(+)(out) = urate(in) + 2 Na(+)(in). Sodium/ascorbate cotransporter. Mediates electrogenic uptake of vitamin C, with a stoichiometry of 2 Na(+) for each ascorbate. Has retained some ancestral activity toward nucleobases such as urate, an oxidized purine. Low-affinity high-capacity sodium:urate cotransporter, may regulate serum urate levels by serving as a renal urate re-absorber. The chain is Solute carrier family 23 member 1 (Slc23a1) from Rattus norvegicus (Rat).